Consider the following 312-residue polypeptide: Malate dehydrogenase (312 aa).

NAD(+)-binding positions include 12–17 (GAGFTG) and Asp36. The substrate site is built by Arg87 and Arg93. NAD(+) contacts are provided by residues Asn100 and 123 to 125 (LTN). Asn125 lines the substrate pocket. Residue Ser149 is modified to Phosphoserine. A substrate-binding site is contributed by Arg156. Catalysis depends on His180, which acts as the Proton acceptor.

This sequence belongs to the LDH/MDH superfamily. MDH type 3 family.

The enzyme catalyses (S)-malate + NAD(+) = oxaloacetate + NADH + H(+). In terms of biological role, catalyzes the reversible oxidation of malate to oxaloacetate. The protein is Malate dehydrogenase of Bacillus cereus (strain ZK / E33L).